The primary structure comprises 128 residues: Holo-[acyl-carrier-protein] synthase (128 aa).

Residues D8 and E58 each contribute to the Mg(2+) site.

This sequence belongs to the P-Pant transferase superfamily. AcpS family. Mg(2+) serves as cofactor.

Its subcellular location is the cytoplasm. The enzyme catalyses apo-[ACP] + CoA = holo-[ACP] + adenosine 3',5'-bisphosphate + H(+). Transfers the 4'-phosphopantetheine moiety from coenzyme A to a Ser of acyl-carrier-protein. This Exiguobacterium sibiricum (strain DSM 17290 / CCUG 55495 / CIP 109462 / JCM 13490 / 255-15) protein is Holo-[acyl-carrier-protein] synthase.